The chain runs to 106 residues: Urease subunit beta (106 aa).

It belongs to the urease beta subunit family. In terms of assembly, heterotrimer of UreA (gamma), UreB (beta) and UreC (alpha) subunits. Three heterotrimers associate to form the active enzyme.

The protein resides in the cytoplasm. The enzyme catalyses urea + 2 H2O + H(+) = hydrogencarbonate + 2 NH4(+). It functions in the pathway nitrogen metabolism; urea degradation; CO(2) and NH(3) from urea (urease route): step 1/1. This Synechococcus sp. (strain CC9605) protein is Urease subunit beta.